The sequence spans 357 residues: Non-structural protein NS2 (357 aa).

2 disordered regions span residues 162 to 199 (QNERESAPRLQVQSVSPREESRWMDDDEAKVDEEAKEM) and 228 to 268 (LDEK…KTHI). Acidic residues-rich tracts occupy residues 230–243 (EKDEEDRDEREDEE) and 250–260 (DDDEQGEDASD).

Belongs to the orbivirus non-structural protein NS2 family.

Functionally, single-stranded RNA-binding protein. This Antilocapra americana (Pronghorn) protein is Non-structural protein NS2 (Segment-8).